The following is a 432-amino-acid chain: MNPVVDILSLDHEGHGVARLDGKVTFVDGALAGERAEIAIFRKHAKYNSANAVAILAPSAQRAEPRCRYFGRCGGCSMQHLEPSAQVAAKQRVLEENLARIGKVRPSVLLPALHGPSWGYRGRARLSVRRVEKKGGVLVGFHEKRSSFIADMASCEVLAPGVSALIQPLRELIGRLSNADRIPQIEVAAGEHVIVLVFRLLEPWNDDDAAHVRAFADAHHVQVWEQRKGPETARPFWPDIAPELSYGLPEFGLVMPFRPTEFTQVNSAINRALVSRALRLLDPRPGERIADLFCGLGNFTLPIAHRGADVLGIEGSTELVARARENALRNALPHARFEVDNLFEMTPEKFAALGPFDKLLIDPPRSGAIEVVKSLPEAGAPRRIVYVSCDPATLARDAEVLVHVKGYRLEAAGVANMFPHTAHVESIALFER.

Residues Met1 to Ala54 enclose the TRAM domain. Residues Cys67, Cys73, Cys76, and Cys155 each coordinate [4Fe-4S] cluster. Gln264, Phe293, Asn298, Glu314, Asn341, and Asp362 together coordinate S-adenosyl-L-methionine. Cys389 (nucleophile) is an active-site residue.

It belongs to the class I-like SAM-binding methyltransferase superfamily. RNA M5U methyltransferase family. RlmD subfamily.

The enzyme catalyses uridine(1939) in 23S rRNA + S-adenosyl-L-methionine = 5-methyluridine(1939) in 23S rRNA + S-adenosyl-L-homocysteine + H(+). In terms of biological role, catalyzes the formation of 5-methyl-uridine at position 1939 (m5U1939) in 23S rRNA. This Thiobacillus denitrificans (strain ATCC 25259 / T1) protein is 23S rRNA (uracil(1939)-C(5))-methyltransferase RlmD.